Reading from the N-terminus, the 235-residue chain is tRNA (guanine-N(1)-)-methyltransferase (235 aa).

S-adenosyl-L-methionine is bound by residues Gly114 and 134–139; that span reads IGDYIL.

It belongs to the RNA methyltransferase TrmD family. In terms of assembly, homodimer.

The protein resides in the cytoplasm. The catalysed reaction is guanosine(37) in tRNA + S-adenosyl-L-methionine = N(1)-methylguanosine(37) in tRNA + S-adenosyl-L-homocysteine + H(+). In terms of biological role, specifically methylates guanosine-37 in various tRNAs. The protein is tRNA (guanine-N(1)-)-methyltransferase of Ehrlichia canis (strain Jake).